A 314-amino-acid chain; its full sequence is ATP synthase gamma chain (314 aa).

This sequence belongs to the ATPase gamma chain family. As to quaternary structure, F-type ATPases have 2 components, CF(1) - the catalytic core - and CF(0) - the membrane proton channel. CF(1) has five subunits: alpha(3), beta(3), gamma(1), delta(1), epsilon(1). CF(0) has three main subunits: a, b and c.

The protein resides in the cellular thylakoid membrane. Produces ATP from ADP in the presence of a proton gradient across the membrane. The gamma chain is believed to be important in regulating ATPase activity and the flow of protons through the CF(0) complex. The sequence is that of ATP synthase gamma chain from Crocosphaera subtropica (strain ATCC 51142 / BH68) (Cyanothece sp. (strain ATCC 51142)).